We begin with the raw amino-acid sequence, 280 residues long: MSALILDGKALAKKTEDELTQCVDKLKASSGHTPILATILVGDDPASATYVKMKGNACSRIGMESLKVEMPTSTTTEQLLAKINELNANPAVHGILLQHPVPEQIDERACFDAIALEKDVDGVTCLGFGRMAMGEEAYGCATPKGIMRLLEAYNIELNGKHAVVVGRSPILGKPMAAMLLNANATVTICHSRTQNLEAHIKQADIVVGAVGKPEFIKAEWIKDGAVVVDAGYHPGGVGDIELAPLADRAAAITPVPGGVGPMTINTLIYQTVDSAQKKLG.

NADP(+) is bound by residues 166–168 (GRS) and Ser-191.

Belongs to the tetrahydrofolate dehydrogenase/cyclohydrolase family. In terms of assembly, homodimer.

The catalysed reaction is (6R)-5,10-methylene-5,6,7,8-tetrahydrofolate + NADP(+) = (6R)-5,10-methenyltetrahydrofolate + NADPH. It carries out the reaction (6R)-5,10-methenyltetrahydrofolate + H2O = (6R)-10-formyltetrahydrofolate + H(+). It functions in the pathway one-carbon metabolism; tetrahydrofolate interconversion. Catalyzes the oxidation of 5,10-methylenetetrahydrofolate to 5,10-methenyltetrahydrofolate and then the hydrolysis of 5,10-methenyltetrahydrofolate to 10-formyltetrahydrofolate. This Saccharophagus degradans (strain 2-40 / ATCC 43961 / DSM 17024) protein is Bifunctional protein FolD.